Here is a 120-residue protein sequence, read N- to C-terminus: Large ribosomal subunit protein uL18 (120 aa).

Belongs to the universal ribosomal protein uL18 family. As to quaternary structure, part of the 50S ribosomal subunit; part of the 5S rRNA/L5/L18/L25 subcomplex. Contacts the 5S and 23S rRNAs.

Functionally, this is one of the proteins that bind and probably mediate the attachment of the 5S RNA into the large ribosomal subunit, where it forms part of the central protuberance. This chain is Large ribosomal subunit protein uL18, found in Synechococcus elongatus (strain ATCC 33912 / PCC 7942 / FACHB-805) (Anacystis nidulans R2).